A 525-amino-acid chain; its full sequence is D-arabinono-1,4-lactone oxidase (525 aa).

The region spanning 23–197 is the FAD-binding PCMH-type domain; that stretch reads YSCRPQLYFQ…VKATIRVIPE (175 aa). H60 bears the Pros-8alpha-FAD histidine mark.

This sequence belongs to the oxygen-dependent FAD-linked oxidoreductase family. Requires FAD as cofactor.

Its subcellular location is the mitochondrion membrane. The enzyme catalyses D-arabinono-1,4-lactone + O2 = dehydro-D-arabinono-1,4-lactone + H2O2 + H(+). Its pathway is cofactor biosynthesis; D-erythroascorbate biosynthesis; dehydro-D-arabinono-1,4-lactone from D-arabinose: step 2/2. The chain is D-arabinono-1,4-lactone oxidase (ALO1) from Kluyveromyces lactis (strain ATCC 8585 / CBS 2359 / DSM 70799 / NBRC 1267 / NRRL Y-1140 / WM37) (Yeast).